A 245-amino-acid chain; its full sequence is 3-deoxy-manno-octulosonate cytidylyltransferase (245 aa).

The protein belongs to the KdsB family.

Its subcellular location is the cytoplasm. The enzyme catalyses 3-deoxy-alpha-D-manno-oct-2-ulosonate + CTP = CMP-3-deoxy-beta-D-manno-octulosonate + diphosphate. Its pathway is nucleotide-sugar biosynthesis; CMP-3-deoxy-D-manno-octulosonate biosynthesis; CMP-3-deoxy-D-manno-octulosonate from 3-deoxy-D-manno-octulosonate and CTP: step 1/1. It functions in the pathway bacterial outer membrane biogenesis; lipopolysaccharide biosynthesis. In terms of biological role, activates KDO (a required 8-carbon sugar) for incorporation into bacterial lipopolysaccharide in Gram-negative bacteria. This chain is 3-deoxy-manno-octulosonate cytidylyltransferase, found in Acaryochloris marina (strain MBIC 11017).